The following is a 583-amino-acid chain: uncharacterized protein (583 aa).

A compositionally biased stretch (polar residues) spans 1–38; it reads MGQGESIPSRQIQRDASMQAVSSESENINDSDRQNSGF. Disordered stretches follow at residues 1 to 39, 53 to 124, 156 to 197, and 362 to 452; these read MGQG…SGFS, GLRR…AIPQ, TQNN…TAIG, and NSGS…QTDH. A compositionally biased stretch (basic and acidic residues) spans 70–80; that stretch reads GNRDRTTERSA. Residues 88–102 show a composition bias toward low complexity; it reads SLLNRNSPSLRSLSP. Composition is skewed to polar residues over residues 156-165, 172-191, 384-408, and 420-452; these read TQNNQSTLAS, VSSS…NLES, LISS…NENV, and ASTA…QTDH. The RING-type zinc finger occupies 525 to 568; that stretch reads CLVCLSNFELNDECRRLKQCNHFFHRECIDQWLTSSQNSCPLCR. A Phosphoserine modification is found at S580.

The protein localises to the membrane. This is an uncharacterized protein from Schizosaccharomyces pombe (strain 972 / ATCC 24843) (Fission yeast).